The following is a 155-amino-acid chain: Photosystem I reaction center subunit XI (155 aa).

2 helical membrane-spanning segments follow: residues 80-102 (LISG…LVSF) and 117-139 (GWSQ…AFFL).

It belongs to the PsaL family.

The protein localises to the cellular thylakoid membrane. This is Photosystem I reaction center subunit XI from Thermosynechococcus vestitus (strain NIES-2133 / IAM M-273 / BP-1).